Consider the following 434-residue polypeptide: Bcl-2-like protein 13 (434 aa).

Positions 14 to 30 (ETKYVVLSYLGLLSQEK) match the BH4 motif. Ser-35 is modified (phosphoserine). A BH3 motif is present at residues 97 to 113 (IEDCLAHLGERVSQDLK). The BH1 signature appears at 144 to 154 (ASGWNKLLVPL). Residues 190–203 (FIIQQGGWGSVFSL) carry the BH2 motif. Positions 224–245 (LPSDNSGQVSPPESPTVTTSWQ) are disordered. The span at 226 to 245 (SDNSGQVSPPESPTVTTSWQ) shows a compositional bias: polar residues. One copy of the A repeat lies at 243 to 253 (SWQSESLPVSL). 7 positions are modified to phosphoserine: Ser-256, Ser-258, Ser-300, Ser-343, Ser-347, Ser-377, and Ser-387. The stretch at 258-268 (SWHTESLPVSL) is one A; approximate repeat. The disordered stretch occupies residues 282 to 303 (EVKSLDSSGAGEKSENNSSNSD). Positions 363–398 (RPEAVERAEGAAQLSEERAGSRKKSHTGEAAAVRGA) are disordered. Positions 365-382 (EAVERAEGAAQLSEERAG) are enriched in basic and acidic residues. The helical transmembrane segment at 409 to 429 (VLLFGGAAAVAILAVAVGVAL) threads the bilayer.

Belongs to the Bcl-2 family. As to quaternary structure, monomer.

The protein resides in the mitochondrion membrane. Functionally, may promote the activation of caspase-3 and apoptosis. This Mus musculus (Mouse) protein is Bcl-2-like protein 13 (Bcl2l13).